Here is a 272-residue protein sequence, read N- to C-terminus: NH(3)-dependent NAD(+) synthetase (272 aa).

45–52 (GISGGQDS) contributes to the ATP binding site. D51 lines the Mg(2+) pocket. R138 contacts deamido-NAD(+). Residue T158 coordinates ATP. E163 contributes to the Mg(2+) binding site. Deamido-NAD(+)-binding residues include K171 and D178. ATP contacts are provided by K187 and T209. Residue 258 to 259 (HK) participates in deamido-NAD(+) binding.

Belongs to the NAD synthetase family. Homodimer.

The enzyme catalyses deamido-NAD(+) + NH4(+) + ATP = AMP + diphosphate + NAD(+) + H(+). The protein operates within cofactor biosynthesis; NAD(+) biosynthesis; NAD(+) from deamido-NAD(+) (ammonia route): step 1/1. Its function is as follows. Catalyzes the ATP-dependent amidation of deamido-NAD to form NAD. Uses ammonia as a nitrogen source. This chain is NH(3)-dependent NAD(+) synthetase, found in Bacillus mycoides (strain KBAB4) (Bacillus weihenstephanensis).